The primary structure comprises 932 residues: Progesterone receptor (932 aa).

Residues 1–164 form an AF3; mediates transcriptional activation region; that stretch reads MTELKAKGPR…PATQGVLSPL (164 aa). Residues 1–254 are disordered; sequence MTELKAKGPR…GGAAAGGAAA (254 aa). The interval 1–565 is modulating, Pro-Rich; sequence MTELKAKGPR…YSFESLPQKI (565 aa). Ser-20 is subject to Phosphoserine. The short motif at 55–59 is the LXXL motif 1 element; sequence LDGLL. A Phosphoserine modification is found at Ser-81. Residues 88–103 show a composition bias toward low complexity; the sequence is SRAEATRGAGGSSSSP. The LXXL motif 2 motif lies at 115 to 119; sequence LDTLL. Phosphoserine is present on residues Ser-130 and Ser-162. The interval 165–304 is mediates transcriptional transrepression; sequence MSRSGGKAGD…LATTVMDFIH (140 aa). A Nuclear localization signal motif is present at residues 183 to 187; that stretch reads KVLPQ. Ser-190 and Ser-213 each carry phosphoserine. The segment covering 220-231 has biased composition (acidic residues); that stretch reads EVEEEDGSESED. Residues 232–254 show a composition bias toward low complexity; sequence SAGPLLKGKPRALGGAAAGGAAA. At Ser-293 the chain carries Phosphoserine; by MAPK1. A compositionally biased stretch (low complexity) spans 334-349; that stretch reads AASAFAPPRSSPSASS. Residues 334–356 are disordered; sequence AASAFAPPRSSPSASSTPVAVGD. Ser-344 carries the post-translational modification Phosphoserine; by MAPK. Lys-387 is covalently cross-linked (Glycyl lysine isopeptide (Lys-Gly) (interchain with G-Cter in SUMO); alternate). Lys-387 is covalently cross-linked (Glycyl lysine isopeptide (Lys-Gly) (interchain with G-Cter in ubiquitin); alternate). Disordered regions lie at residues 414-451 and 468-499; these read PDFPLGPPPPLPPRAPPSRPGEAAVTAAPASASVSSAS and PPQQGPFAPPPSKAPGAGGCLPPRDGLPSTAA. Over residues 417–432 the composition is skewed to pro residues; the sequence is PLGPPPPLPPRAPPSR. The span at 433–451 shows a compositional bias: low complexity; the sequence is PGEAAVTAAPASASVSSAS. Residues 455-545 form an AF1; mediates transcriptional activation region; that stretch reads STLECILYKA…VYPPYLNYLR (91 aa). A compositionally biased stretch (pro residues) spans 470 to 480; it reads QQGPFAPPPSK. Lys-530 participates in a covalent cross-link: Glycyl lysine isopeptide (Lys-Gly) (interchain with G-Cter in SUMO). 2 NR C4-type zinc fingers span residues 566-586 and 602-626; these read CLICGDEASGCHYGVLTCGSC and CAGRNDCIVDKIRRKNCPACRLRKC. Positions 566 to 638 form a DNA-binding region, nuclear receptor; the sequence is CLICGDEASG…AGMVLGGRKF (73 aa). Ser-675 carries the post-translational modification Phosphoserine. The NR LBD domain maps to 678-912; sequence QDIQLIPPLI…EFPEMMSEVI (235 aa). The interval 686–932 is AF2; mediates transcriptional activation; that stretch reads LINLLMSIEP…MVKPLLFHKK (247 aa). Arg-765 contributes to the progesterone binding site.

It belongs to the nuclear hormone receptor family. In terms of assembly, interacts with SMARD1 and UNC45A. Interacts with CUEDC2; the interaction promotes ubiquitination, decreases sumoylation, and represses transcriptional activity. Interacts with PIAS3; the interaction promotes sumoylation of PR in a hormone-dependent manner, inhibits DNA-binding, and alters nuclear export. Interacts with SP1; the interaction requires ligand-induced phosphorylation on Ser-344 by ERK1/2-MAPK. Interacts with PRMT2. Interacts with NCOA2 and NCOA1. Interacts with KLF9. Interacts with GTF2B. Post-translationally, phosphorylated on multiple serine sites. Several of these sites are hormone-dependent. Phosphorylation on Ser-293 is highly hormone-dependent and modulates ubiquitination and sumoylation on Lys-387. Phosphorylation on Ser-102 and Ser-344 also requires induction by hormone. Basal phosphorylation on Ser-81, Ser-162 and Ser-190 is increased in response to progesterone and can be phosphorylated in vitro by the CDK2-A1 complex. Phosphorylation at Ser-162 and Ser-293, but not at Ser-190, is impaired during the G(2)/M phase of the cell cycle. Phosphorylation on Ser-344 by ERK1/2 MAPK is required for interaction with SP1. Sumoylation is hormone-dependent and represses transcriptional activity. Sumoylation on all three sites is enhanced by PIAS3. Desumoylated by SENP1. Sumoylation on Lys-387, the main site of sumoylation, is repressed by ubiquitination on the same site, and modulated by phosphorylation at Ser-293. In terms of processing, ubiquitination is hormone-dependent and represses sumoylation on the same site. Promoted by MAPK-mediated phosphorylation on Ser-293. Ubiquitinated by UBR5, leading to its degradation: UBR5 specifically recognizes and binds ligand-bound PGR when it is not associated with coactivators (NCOAs). In presence of NCOAs, the UBR5-degron is not accessible, preventing its ubiquitination and degradation. Post-translationally, palmitoylated by ZDHHC7 and ZDHHC21. Palmitoylation is required for plasma membrane targeting and for rapid intracellular signaling via ERK and AKT kinases and cAMP generation.

It is found in the nucleus. The protein localises to the cytoplasm. The steroid hormones and their receptors are involved in the regulation of eukaryotic gene expression and affect cellular proliferation and differentiation in target tissues. Transcriptional activator of several progesteron-dependent promoters in a variety of cell types. Involved in activation of SRC-dependent MAPK signaling on hormone stimulation. The protein is Progesterone receptor (PGR) of Hylobates lar (Lar gibbon).